We begin with the raw amino-acid sequence, 293 residues long: Shikimate dehydrogenase (NADP(+)) (293 aa).

Residues 26 to 28 (SKS) and T73 each bind shikimate. The active-site Proton acceptor is K77. Residue E89 coordinates NADP(+). Residues N98 and D113 each coordinate shikimate. NADP(+)-binding positions include 137-141 (GAGGA), 161-166 (NRTRQR), and I231. Y233 serves as a coordination point for shikimate. G254 is a binding site for NADP(+).

Belongs to the shikimate dehydrogenase family. In terms of assembly, homodimer.

The catalysed reaction is shikimate + NADP(+) = 3-dehydroshikimate + NADPH + H(+). It participates in metabolic intermediate biosynthesis; chorismate biosynthesis; chorismate from D-erythrose 4-phosphate and phosphoenolpyruvate: step 4/7. In terms of biological role, involved in the biosynthesis of the chorismate, which leads to the biosynthesis of aromatic amino acids. Catalyzes the reversible NADPH linked reduction of 3-dehydroshikimate (DHSA) to yield shikimate (SA). This Bartonella quintana (strain Toulouse) (Rochalimaea quintana) protein is Shikimate dehydrogenase (NADP(+)).